Consider the following 493-residue polypeptide: MWSLIPLTAIVLVLVAILHRLFFHPLSHVPGPFLARFSSLYLHSICYLGIEATVLRQLHIKYKTKVLRVAPNSVSISDSEAVGEIYVRGGGFPKDDRYKNFNLGPIVSIFSSLDREYRDVRAKAVAPLFSPAQLRAESGPQGVIGGCIAEFVDQLRKSKEAGIGADLMDMCARLSIDVVTGYLLGQKYGGLQENAHLPPQERQSHKLSANPFIFSIVAFSRFSLLPHRIFQFLYSTSQRLSTNDEVTESFLKLDRFTNNVLEGTTAGEKVSEKPNGGYYHERLISQAGISRMEAAAQSQAVLFAGADSTAVMLATILFHLVQNGAARSRLLCEVRSDKPQDMRFLRAVVKEGLRLGMANPTRMTRVVPKSGPGLRVGDVLLSPGTIVGCAAYNLHHDPEVFPDPFTFRPERWLDDGTDRGLRRPGMEKSMIPFGVGSRACIGKNLAQQQLHDTVVAVIDSEVLEGARTCQERIEIIEWFNADIKGHHLDIKWS.

Transmembrane regions (helical) follow at residues Ser-3–Phe-23 and Val-301–Val-321. Heme is bound at residue Cys-440.

It belongs to the cytochrome P450 family. The cofactor is heme.

The protein resides in the membrane. It participates in secondary metabolite biosynthesis; terpenoid biosynthesis. Its function is as follows. Cytochrome P450 monooxygenase; part of the gene cluster that mediates the biosynthesis of the phthalide-terpenoid hybrid 11'-O-desmethylfendlerol. Within the pathway, mfmF catalyzes C-3 hydroxylation of 5-hydroxy-4-(hydroxymethyl)-7-methoxy-6-methylphthalide to yield cyclopolic acid. The biosynthesis of 11'-O-desmethylfendlerol begins with the NR-PKS mfmB that forms 3,5-dimethylorsellinic acid (DMOA), which is then transformed into the phthalide 5,7-dihydroxy-4-(hydroxymethyl)-6-methylphthalide by the cytochrome P450 monooxygenase mfmA and the hydrolase mfmC. Subsequently, the methyltransferase mfmE catalyzes 7-O-methylation to yield 5-hydroxy-4-(hydroxymethyl)-7-methoxy-6-methylphthalide, which undergoes C-3 hydroxylation by the cytochrome P450 monooxygenase mfmF. The resultant cyclopolic acid (2,5-dihydroxy-4-(hydroxymethyl)-7-methoxy-6-methylphthalide) is then farnesylated by the DMATS-type prenyltransferase mfmD to afford 5-O-farnesylcyclopolic acid. Finally, the Pyr4-family terpene cyclase mfmH cyclizes the farnesyl moiety of 5-O-farnesylcyclopolic acid into a drimane-like structure, thus completing the biosynthesis of 11'-O-desmethylfendlerol. This Annulohypoxylon moriforme (Filamentous fungus) protein is Cytochrome P450 monooxygenase mfmF.